The chain runs to 452 residues: Probable phosphoglucosamine mutase (452 aa).

The active-site Phosphoserine intermediate is Ser96. Mg(2+) is bound by residues Ser96, Asp233, Asp235, and Asp237. Position 96 is a phosphoserine (Ser96).

The protein belongs to the phosphohexose mutase family. The cofactor is Mg(2+). Activated by phosphorylation.

It carries out the reaction alpha-D-glucosamine 1-phosphate = D-glucosamine 6-phosphate. Catalyzes the conversion of glucosamine-6-phosphate to glucosamine-1-phosphate. This Pyrococcus furiosus (strain ATCC 43587 / DSM 3638 / JCM 8422 / Vc1) protein is Probable phosphoglucosamine mutase.